We begin with the raw amino-acid sequence, 279 residues long: 3-methyl-2-oxobutanoate hydroxymethyltransferase (279 aa).

Mg(2+) is bound by residues aspartate 44 and aspartate 83. Residues 44–45 (DS), aspartate 83, and lysine 113 each bind 3-methyl-2-oxobutanoate. Glutamate 115 is a binding site for Mg(2+). Glutamate 182 serves as the catalytic Proton acceptor.

Belongs to the PanB family. As to quaternary structure, homodecamer; pentamer of dimers. Requires Mg(2+) as cofactor.

Its subcellular location is the cytoplasm. The catalysed reaction is 3-methyl-2-oxobutanoate + (6R)-5,10-methylene-5,6,7,8-tetrahydrofolate + H2O = 2-dehydropantoate + (6S)-5,6,7,8-tetrahydrofolate. It participates in cofactor biosynthesis; (R)-pantothenate biosynthesis; (R)-pantoate from 3-methyl-2-oxobutanoate: step 1/2. Catalyzes the reversible reaction in which hydroxymethyl group from 5,10-methylenetetrahydrofolate is transferred onto alpha-ketoisovalerate to form ketopantoate. This Dehalococcoides mccartyi (strain ATCC BAA-2100 / JCM 16839 / KCTC 5957 / BAV1) protein is 3-methyl-2-oxobutanoate hydroxymethyltransferase.